Consider the following 161-residue polypeptide: Arachidonate 5-lipoxygenase-activating protein (161 aa).

The Lumenal portion of the chain corresponds to 1–8 (MDQEAVGN). The helical transmembrane segment at 9–30 (VVLLAIVTLISVVQNAFFAHKV) threads the bilayer. Topologically, residues 31 to 52 (ELESKAQSGRSFQRTGTLAFER) are cytoplasmic. A helical membrane pass occupies residues 53–77 (VYTANQNCVDAYPTFLVVLWTAGLL). Over 78–80 (CSQ) the chain is Lumenal. The chain crosses the membrane as a helical span at residues 81–102 (VPAAFAGLMYLFVRQKYFVGYL). Topologically, residues 103 to 107 (GERTQ) are cytoplasmic. Residues 108–115 (STPGYIFG) lie within the membrane without spanning it. Residues 116-128 (KRIILFLFLMSLA) traverse the membrane as a helical segment. At 129–161 (GILNHYLIFFFGSDFENYIRTITTTISPLLLIP) the chain is on the lumenal side.

This sequence belongs to the MAPEG family. As to quaternary structure, homotrimer. Interacts with LTC4S and ALOX5.

It is found in the nucleus membrane. It localises to the endoplasmic reticulum membrane. Its function is as follows. Required for leukotriene biosynthesis by ALOX5 (5-lipoxygenase). Anchors ALOX5 to the membrane. Binds arachidonic acid, and could play an essential role in the transfer of arachidonic acid to ALOX5. Binds to MK-886, a compound that blocks the biosynthesis of leukotrienes. The protein is Arachidonate 5-lipoxygenase-activating protein (Alox5ap) of Rattus norvegicus (Rat).